A 270-amino-acid polypeptide reads, in one-letter code: Putative phosphoenolpyruvate synthase regulatory protein (270 aa).

150 to 157 (GVSRCGKT) lines the ADP pocket.

This sequence belongs to the pyruvate, phosphate/water dikinase regulatory protein family. PSRP subfamily.

The catalysed reaction is [pyruvate, water dikinase] + ADP = [pyruvate, water dikinase]-phosphate + AMP + H(+). It catalyses the reaction [pyruvate, water dikinase]-phosphate + phosphate + H(+) = [pyruvate, water dikinase] + diphosphate. Bifunctional serine/threonine kinase and phosphorylase involved in the regulation of the phosphoenolpyruvate synthase (PEPS) by catalyzing its phosphorylation/dephosphorylation. This chain is Putative phosphoenolpyruvate synthase regulatory protein, found in Shewanella piezotolerans (strain WP3 / JCM 13877).